A 150-amino-acid chain; its full sequence is Probable FKBP-type 16 kDa peptidyl-prolyl cis-trans isomerase (150 aa).

The region spanning 14–88 (NTEVTLHFAL…PNPQNVQIIP (75 aa)) is the PPIase FKBP-type domain.

This sequence belongs to the FKBP-type PPIase family.

It carries out the reaction [protein]-peptidylproline (omega=180) = [protein]-peptidylproline (omega=0). Functionally, PPIases accelerate the folding of proteins. The protein is Probable FKBP-type 16 kDa peptidyl-prolyl cis-trans isomerase (yaaD) of Pseudomonas fluorescens.